The chain runs to 300 residues: Zinc finger CCCH domain-containing protein 14 (300 aa).

A disordered region spans residues 1-38 (MEVGGRKRGKPDGANGAGGKRARESESFQTGVGSKSKP). 2 C3H1-type zinc fingers span residues 33–61 (GSKS…HHFP) and 99–127 (TVKT…HGER). Positions 170–234 (SATAKISVDA…DQIKNASAMV (65 aa)) constitute a KH domain. The segment at 243–262 (GGAPPQGKKPVGGSHRGGGP) is disordered. The C3H1-type 3 zinc-finger motif lies at 265–292 (NFKTKLCENFTKGSCTFGDRCHFAHGEN).

This is Zinc finger CCCH domain-containing protein 14 from Oryza sativa subsp. japonica (Rice).